The sequence spans 69 residues: uncharacterized protein (69 aa).

The signal sequence occupies residues 1–18; the sequence is MAMLWISMFIIMRKYGRS. Positions 17-69 are disordered; the sequence is RSSSSSSSSSSSSSSSSSSSSSSSSSSSSSSSSSSSSSSSSGSSSNSNRVVVV. A compositionally biased stretch (low complexity) spans 18–61; it reads SSSSSSSSSSSSSSSSSSSSSSSSSSSSSSSSSSSSSSSSGSSS.

It is found in the secreted. This is an uncharacterized protein from Dictyostelium discoideum (Social amoeba).